The primary structure comprises 161 residues: Cyclic pyranopterin monophosphate synthase (161 aa).

Substrate is bound by residues 75–77 and 113–114; these read LCH and ME. D128 is a catalytic residue.

It belongs to the MoaC family. As to quaternary structure, homohexamer; trimer of dimers.

The catalysed reaction is (8S)-3',8-cyclo-7,8-dihydroguanosine 5'-triphosphate = cyclic pyranopterin phosphate + diphosphate. It functions in the pathway cofactor biosynthesis; molybdopterin biosynthesis. In terms of biological role, catalyzes the conversion of (8S)-3',8-cyclo-7,8-dihydroguanosine 5'-triphosphate to cyclic pyranopterin monophosphate (cPMP). The chain is Cyclic pyranopterin monophosphate synthase from Salmonella dublin (strain CT_02021853).